A 700-amino-acid polypeptide reads, in one-letter code: Suprabasin (700 aa).

The N-terminal stretch at 1–23 (MYLVSLLSSCCLLVLLGTLPARA) is a signal peptide. Disordered regions lie at residues 133–158 (QGGSEAGKFGQGSHHAFGQGGNVANK), 183–258 (HAFG…VADK), and 283–391 (HAFG…GAHH). Residues 488-546 (KEAEKVAHGVQNGVNQAQKEAEKVAHGVQNGVNQAQKEAEKVAHGVQNGVNQAQKEAEK) are a coiled coil. Over residues 641–654 (GVNQPSKEANQLLN) the composition is skewed to polar residues. The disordered stretch occupies residues 641 to 669 (GVNQPSKEANQLLNGSHQGQGGYGGQHGG). The segment covering 658–668 (QGQGGYGGQHG) has biased composition (gly residues).

As to expression, detected in epidermis, in suprabasal keratinocytes. Detected in suprabasal layers of embryonic epidermis and in stratified layers of embryonic tongue and palate. Detected in adult stomach.

The protein localises to the secreted. The chain is Suprabasin (Sbsn) from Mus musculus (Mouse).